Consider the following 471-residue polypeptide: UDP-glycosyltransferase CGT (471 aa).

His-24 serves as the catalytic Proton acceptor. Position 24 (His-24) interacts with an anthocyanidin. The Charge relay role is filled by Asp-120. Thr-143 is a binding site for UDP-alpha-D-glucose. The UDP stretch occupies residues 280 to 281 (SR). Val-343, Gln-345, His-360, Trp-363, Asn-364, Ser-365, and Glu-368 together coordinate UDP-alpha-D-glucose. Gly-383 is a binding site for an anthocyanidin. Residues Asp-384 and Gln-385 each coordinate UDP-alpha-D-glucose.

The protein belongs to the UDP-glycosyltransferase family.

The catalysed reaction is a 3'-hydro-2'-hydroxy-beta-oxodihydrochalcone + UDP-alpha-D-glucose = a 3'-(beta-D-glucopyranosyl)-2'-hydroxy-beta-oxodihydrochalcone + UDP + H(+). In terms of biological role, UDP-glucose-dependent glucosyltransferase catalyzing the c-glucosylation of 2-hydroxyflavanones. This chain is UDP-glycosyltransferase CGT, found in Oryza sativa subsp. japonica (Rice).